Here is a 614-residue protein sequence, read N- to C-terminus: Dihydroxy-acid dehydratase (614 aa).

Asp81 is a Mg(2+) binding site. Residue Cys122 coordinates [2Fe-2S] cluster. Residues Asp123 and Lys124 each coordinate Mg(2+). Lys124 is subject to N6-carboxylysine. Cys196 serves as a coordination point for [2Fe-2S] cluster. Residue Glu492 coordinates Mg(2+). Ser518 serves as the catalytic Proton acceptor.

It belongs to the IlvD/Edd family. In terms of assembly, homodimer. [2Fe-2S] cluster is required as a cofactor. Requires Mg(2+) as cofactor.

It carries out the reaction (2R)-2,3-dihydroxy-3-methylbutanoate = 3-methyl-2-oxobutanoate + H2O. It catalyses the reaction (2R,3R)-2,3-dihydroxy-3-methylpentanoate = (S)-3-methyl-2-oxopentanoate + H2O. It participates in amino-acid biosynthesis; L-isoleucine biosynthesis; L-isoleucine from 2-oxobutanoate: step 3/4. Its pathway is amino-acid biosynthesis; L-valine biosynthesis; L-valine from pyruvate: step 3/4. Its function is as follows. Functions in the biosynthesis of branched-chain amino acids. Catalyzes the dehydration of (2R,3R)-2,3-dihydroxy-3-methylpentanoate (2,3-dihydroxy-3-methylvalerate) into 2-oxo-3-methylpentanoate (2-oxo-3-methylvalerate) and of (2R)-2,3-dihydroxy-3-methylbutanoate (2,3-dihydroxyisovalerate) into 2-oxo-3-methylbutanoate (2-oxoisovalerate), the penultimate precursor to L-isoleucine and L-valine, respectively. This is Dihydroxy-acid dehydratase from Ruegeria sp. (strain TM1040) (Silicibacter sp.).